Reading from the N-terminus, the 33-residue chain is Brevinin-2CDYb (33 aa).

A disulfide bridge connects residues Cys27 and Cys33.

It belongs to the frog skin active peptide (FSAP) family. Brevinin subfamily. Expressed by the skin glands.

It localises to the secreted. In terms of biological role, antimicrobial peptide. The sequence is that of Brevinin-2CDYb from Rana dybowskii (Dybovsky's frog).